The sequence spans 1383 residues: ATP-dependent RNA helicase TDRD9 (1383 aa).

Positions Glu35 to Glu82 are disordered. Positions Ala36–Glu46 are enriched in basic and acidic residues. Low complexity predominate over residues Ser70–Ser80. The Helicase ATP-binding domain occupies Ile144–Asn310. Residue Gly157 to Ser164 coordinates ATP. A DEAH box motif is present at residues Asp256–His259. Residues Ser378–Gly545 enclose the Helicase C-terminal domain. Residues His945–Leu1005 enclose the Tudor domain.

Belongs to the DEAD box helicase family. DEAH subfamily. As to quaternary structure, interacts with piRNA-associated proteins PIWIL1 and PIWIL4. Predominantly expressed in reproductive organs. Detected in mitotic spermatogonia, meiotic spermatocytes (predominantly at the pachytene stage), haploid spermatids in the testis, and in growing oocytes in the ovary (at protein level).

Its subcellular location is the cytoplasm. It is found in the nucleus. It carries out the reaction ATP + H2O = ADP + phosphate + H(+). Functionally, ATP-binding RNA helicase which plays a central role during spermatogenesis by repressing transposable elements and preventing their mobilization, which is essential for the germline integrity. Acts via the piRNA metabolic process, which mediates the repression of transposable elements during meiosis by forming complexes composed of piRNAs and Piwi proteins and governs the methylation and subsequent repression of transposons. Acts downstream of piRNA biogenesis: exclusively required for transposon silencing in the nucleus, suggesting that it acts as a nuclear effector in the nucleus together with PIWIL4. This chain is ATP-dependent RNA helicase TDRD9, found in Mus musculus (Mouse).